Reading from the N-terminus, the 664-residue chain is Pentatricopeptide repeat-containing protein At1g10910, chloroplastic (664 aa).

Residues 1-72 (METPLLVGLE…KRHSNSYLAR (72 aa)) constitute a chloroplast transit peptide. 9 PPR repeats span residues 165-199 (NVYICNSILSCLVKNGKLDSCIKLFDQMKRDGLKP), 200-235 (DVVTYNTLLAGCIKVKNGYPKAIELIGELPHNGIQM), 236-270 (DSVMYGTVLAICASNGRSEEAENFIQQMKVEGHSP), 271-305 (NIYHYSSLLNSYSWKGDYKKADELMTEMKSIGLVP), 306-340 (NKVMMTTLLKVYIKGGLFDRSRELLSELESAGYAE), 341-375 (NEMPYCMLMDGLSKAGKLEEARSIFDDMKGKGVRS), 376-406 (DGYANSIMISALCRSKRFKEAKELSRDSETT), 411-445 (DLVMLNTMLCAYCRAGEMESVMRMMKKMDEQAVSP), and 446-480 (DYNTFHILIKYFIKEKLHLLAYQTTLDMHSKGHRL).

The protein belongs to the PPR family. P subfamily.

The protein localises to the plastid. It localises to the chloroplast. This Arabidopsis thaliana (Mouse-ear cress) protein is Pentatricopeptide repeat-containing protein At1g10910, chloroplastic.